Consider the following 281-residue polypeptide: Bifunctional protein FolD (281 aa).

Residues 165–167 (GRG), Thr-192, and Val-233 contribute to the NADP(+) site.

The protein belongs to the tetrahydrofolate dehydrogenase/cyclohydrolase family. As to quaternary structure, homodimer.

It carries out the reaction (6R)-5,10-methylene-5,6,7,8-tetrahydrofolate + NADP(+) = (6R)-5,10-methenyltetrahydrofolate + NADPH. The enzyme catalyses (6R)-5,10-methenyltetrahydrofolate + H2O = (6R)-10-formyltetrahydrofolate + H(+). It participates in one-carbon metabolism; tetrahydrofolate interconversion. Functionally, catalyzes the oxidation of 5,10-methylenetetrahydrofolate to 5,10-methenyltetrahydrofolate and then the hydrolysis of 5,10-methenyltetrahydrofolate to 10-formyltetrahydrofolate. This Mycobacterium tuberculosis (strain ATCC 25177 / H37Ra) protein is Bifunctional protein FolD.